The primary structure comprises 304 residues: UDP-N-acetylenolpyruvoylglucosamine reductase (304 aa).

The FAD-binding PCMH-type domain occupies 33 to 213; that stretch reads IGGPADIMVI…LEITRDLTER (181 aa). The active site involves Arg177. Catalysis depends on Ser227, which acts as the Proton donor. Glu297 is a catalytic residue.

Belongs to the MurB family. FAD is required as a cofactor.

The protein resides in the cytoplasm. The catalysed reaction is UDP-N-acetyl-alpha-D-muramate + NADP(+) = UDP-N-acetyl-3-O-(1-carboxyvinyl)-alpha-D-glucosamine + NADPH + H(+). It functions in the pathway cell wall biogenesis; peptidoglycan biosynthesis. Its function is as follows. Cell wall formation. The chain is UDP-N-acetylenolpyruvoylglucosamine reductase from Alkaliphilus oremlandii (strain OhILAs) (Clostridium oremlandii (strain OhILAs)).